Here is a 426-residue protein sequence, read N- to C-terminus: Probable histidine--tRNA ligase (426 aa).

Belongs to the class-II aminoacyl-tRNA synthetase family. As to quaternary structure, homodimer.

It is found in the cytoplasm. The enzyme catalyses tRNA(His) + L-histidine + ATP = L-histidyl-tRNA(His) + AMP + diphosphate + H(+). The chain is Probable histidine--tRNA ligase (hisS) from Tropheryma whipplei (strain TW08/27) (Whipple's bacillus).